We begin with the raw amino-acid sequence, 686 residues long: L-type lectin-domain containing receptor kinase VII.1 (686 aa).

The first 20 residues, 1-20 (MKALLFLLTLFLILPNPISA), serve as a signal peptide directing secretion. Residues 21–256 (IDFIFNGFND…SHKILAWSFS (236 aa)) are legume-lectin like. Topologically, residues 21–286 (IDFIFNGFND…PKDSIVKAKW (266 aa)) are extracellular. N-linked (GlcNAc...) asparagine glycans are attached at residues Asn-29, Asn-34, Asn-52, Asn-64, Asn-111, Asn-123, Asn-168, Asn-203, Asn-224, and Asn-259. Residues 287 to 307 (FVFVLVLICFLVVALVGLVLF) form a helical membrane-spanning segment. The Cytoplasmic segment spans residues 308 to 686 (AVVRKRLERA…SWNSSILEGR (379 aa)). One can recognise a Protein kinase domain in the interval 347-628 (FDEKNVIGIG…VFEGDKAEIF (282 aa)). Residues 353–361 (IGIGGNGKV) and Lys-376 contribute to the ATP site. Asp-475 (proton acceptor) is an active-site residue.

It in the C-terminal section; belongs to the protein kinase superfamily. Ser/Thr protein kinase family. The protein in the N-terminal section; belongs to the leguminous lectin family.

The protein resides in the cell membrane. The enzyme catalyses L-seryl-[protein] + ATP = O-phospho-L-seryl-[protein] + ADP + H(+). The catalysed reaction is L-threonyl-[protein] + ATP = O-phospho-L-threonyl-[protein] + ADP + H(+). This Arabidopsis thaliana (Mouse-ear cress) protein is L-type lectin-domain containing receptor kinase VII.1 (LECRK71).